A 2974-amino-acid chain; its full sequence is Mediator of RNA polymerase II transcription subunit 13 (2974 aa).

Composition is skewed to basic and acidic residues over residues 284 to 299 (EKEP…KTPE), 340 to 367 (MFEP…AREV), 374 to 390 (RREE…RADD), and 624 to 633 (SREKRKEYQP). Disordered stretches follow at residues 284 to 309 (EKEP…PQTT), 340 to 394 (MFEP…NLED), 624 to 654 (SREK…KRKV), 677 to 749 (FNAW…FADI), 764 to 801 (LYNP…PKEE), 1032 to 1063 (PHGS…QDGE), 1099 to 1134 (GMLS…YPTP), 1140 to 1159 (LQAD…FRST), 1281 to 1342 (TLAR…TPTY), 1416 to 1486 (QGGL…DATA), 2052 to 2078 (ELKK…ATPA), and 2247 to 2309 (QDEA…PAGM). The stretch at 351 to 396 (KEETAAEKEKRMAAREVRRLRRQRREERRREMEKQRRADDNLEDYD) forms a coiled coil. Basic residues-rich tracts occupy residues 634–654 (YHRK…KRKV) and 677–688 (FNAWKQKKKGPP). A compositionally biased stretch (basic and acidic residues) spans 689–717 (PKKDLAKKEAAADKDKDKDKEKDKEKDKD). Residues 1035–1048 (SFDHDSEPEFDEQR) show a composition bias toward basic and acidic residues. Polar residues-rich tracts occupy residues 1122–1134 (IESQ…YPTP) and 1140–1149 (LQADASQAHS). 2 stretches are compositionally biased toward pro residues: residues 1284-1299 (RPPP…PTPM) and 1326-1340 (PAYP…PTTP). The span at 1443–1464 (IRNTDAPNDPTVSKLQSAVSRN) shows a compositional bias: polar residues. Over residues 1473 to 1486 (AATSIPTATDDATA) the composition is skewed to low complexity. Positions 2064–2073 (STQSENSEGN) are enriched in polar residues. The stretch at 2220 to 2301 (AVEGRLKRQK…EQYPAEESQA (82 aa)) forms a coiled coil. Basic and acidic residues-rich tracts occupy residues 2247–2258 (QDEADKREKMDE) and 2281–2292 (EEKKRNKQKENE). Positions 2347–2974 (WKQRDTRVQN…LYHSVARLLV (628 aa)) are mediates transcriptional repression.

The protein belongs to the Mediator complex subunit 13 family. As to quaternary structure, component of the Mediator complex.

The protein resides in the nucleus. Functionally, component of the Mediator complex, a coactivator involved in regulated gene transcription of nearly all RNA polymerase II-dependent genes. Mediator functions as a bridge to convey information from gene-specific regulatory proteins to the basal RNA polymerase II transcription machinery. Mediator is recruited to promoters by direct interactions with regulatory proteins and serves as a scaffold for the assembly of a functional preinitiation complex with RNA polymerase II and the general transcription factors. This chain is Mediator of RNA polymerase II transcription subunit 13 (let-19), found in Caenorhabditis briggsae.